Consider the following 98-residue polypeptide: NADH-ubiquinone oxidoreductase chain 4L (98 aa).

3 consecutive transmembrane segments (helical) span residues 1–21, 29–49, and 61–81; these read MSLVYMNIMMAFTVSLTGLLM, SLLCLEGMMLSLFILATLMIL, and IILLVFAACEAALGLSLLVMV.

The protein belongs to the complex I subunit 4L family. In terms of assembly, core subunit of respiratory chain NADH dehydrogenase (Complex I) which is composed of 45 different subunits.

The protein localises to the mitochondrion inner membrane. It catalyses the reaction a ubiquinone + NADH + 5 H(+)(in) = a ubiquinol + NAD(+) + 4 H(+)(out). Core subunit of the mitochondrial membrane respiratory chain NADH dehydrogenase (Complex I) which catalyzes electron transfer from NADH through the respiratory chain, using ubiquinone as an electron acceptor. Part of the enzyme membrane arm which is embedded in the lipid bilayer and involved in proton translocation. The protein is NADH-ubiquinone oxidoreductase chain 4L (MT-ND4L) of Ovis aries (Sheep).